We begin with the raw amino-acid sequence, 208 residues long: MTKGILGKKVGMTQIFTESGEFIPVTVIEATPNVVLQVKTVETDGYEAVQVGFDDKREVLSNKPAKGHVAKANTAPKRFIREFKNIEGLEVGAELSVEQFEAGDVVDVTGTSKGKGFQGVIKRHGQSRGPMAHGSRYHRRPGSMGPVAPNRVFKNKRLAGRMGGNRVTVQNLEIVQVIPEKNVILIKGNVPGAKKSLITIKSAVKAAK.

The interval 116 to 148 is disordered; it reads GFQGVIKRHGQSRGPMAHGSRYHRRPGSMGPVA.

Belongs to the universal ribosomal protein uL3 family. In terms of assembly, part of the 50S ribosomal subunit. Forms a cluster with proteins L14 and L19.

Functionally, one of the primary rRNA binding proteins, it binds directly near the 3'-end of the 23S rRNA, where it nucleates assembly of the 50S subunit. This is Large ribosomal subunit protein uL3 from Streptococcus pyogenes serotype M12 (strain MGAS2096).